The primary structure comprises 44 residues: Large ribosomal subunit protein bL34 (44 aa).

This sequence belongs to the bacterial ribosomal protein bL34 family.

This chain is Large ribosomal subunit protein bL34, found in Wolbachia sp. subsp. Brugia malayi (strain TRS).